Reading from the N-terminus, the 629-residue chain is tRNA uridine 5-carboxymethylaminomethyl modification enzyme MnmG (629 aa).

FAD-binding positions include 13-18 (GGGHAG), valine 125, and serine 180. An NAD(+)-binding site is contributed by 273–287 (GPRYCPSIEDKVMRF). Glutamine 370 serves as a coordination point for FAD.

It belongs to the MnmG family. As to quaternary structure, homodimer. Heterotetramer of two MnmE and two MnmG subunits. FAD serves as cofactor.

It localises to the cytoplasm. Its function is as follows. NAD-binding protein involved in the addition of a carboxymethylaminomethyl (cmnm) group at the wobble position (U34) of certain tRNAs, forming tRNA-cmnm(5)s(2)U34. This is tRNA uridine 5-carboxymethylaminomethyl modification enzyme MnmG from Sodalis glossinidius (strain morsitans).